The following is a 1699-amino-acid chain: Eukaryotic translation initiation factor 2-alpha kinase gcn-2 (1699 aa).

In terms of domain architecture, RWD spans 22–138 (EEKLALDAVY…HRVREFLTDH (117 aa)). 2 Protein kinase domains span residues 108–507 (LTIL…DVVL) and 508–999 (VRNK…DEDL). Residues 114–122 (MADTWEGCV), lysine 154, 497–505 (LGRGGFGDV), and lysine 520 contribute to the ATP site. Disordered stretches follow at residues 572–615 (DSSL…SLMP) and 632–725 (KEWS…SVFE). The segment covering 669–706 (SSDDEDDDDSSEIDWDAESEEVEDEESDDSDEEDEDDG) has biased composition (acidic residues). Over residues 711–720 (QLNTETSTGA) the composition is skewed to polar residues. Aspartate 829 functions as the Proton acceptor in the catalytic mechanism.

Belongs to the protein kinase superfamily. Ser/Thr protein kinase family. GCN2 subfamily.

The enzyme catalyses L-seryl-[protein] + ATP = O-phospho-L-seryl-[protein] + ADP + H(+). It catalyses the reaction L-threonyl-[protein] + ATP = O-phospho-L-threonyl-[protein] + ADP + H(+). In terms of biological role, serine/threonine-protein kinase which phosphorylates the alpha subunit of eukaryotic translation-initiation factor 2 (eIF2alpha), leading to its inactivation and thus to a rapid reduction of translational initiation and repression of global protein synthesis. Involved in the unfolded protein response (UPR) triggered by several stresses including mitochondrial, osmotic and oxidative stresses, amino acid deprivation and UV irradiation, probably by phosphorylating and inhibiting eIF2alpha. In addition, leads to the selective translation/transcription of some mRNA including atf-5, pha-4 and gpdh-1 which are part of the UPR. Required for maintaining lifespan during amino acid starvation. Involved in hypoxia-mediated adaptive protective response. This Caenorhabditis elegans protein is Eukaryotic translation initiation factor 2-alpha kinase gcn-2.